The chain runs to 443 residues: Threonine/serine transporter TdcC (443 aa).

The next 11 membrane-spanning stretches (helical) occupy residues 24–44, 45–65, 95–115, 140–160, 163–183, 207–227, 259–279, 319–339, 363–383, 385–405, and 423–443; these read WVLG…PISA, GIGG…IAFF, VGGV…LWIY, VVAL…KDLM, VMGY…LSLI, ILVT…FSPI, ASVL…FTLS, ASII…LGTL, LNMI…YINP, ILDL…CLLP, and SNYF…YQLM.

Belongs to the amino acid/polyamine transporter 2 family. SdaC/TdcC subfamily.

The protein localises to the cell inner membrane. The catalysed reaction is L-threonine(in) + H(+)(in) = L-threonine(out) + H(+)(out). It catalyses the reaction L-serine(in) + H(+)(in) = L-serine(out) + H(+)(out). Functionally, involved in the import of threonine and serine into the cell, with the concomitant import of a proton (symport system). This chain is Threonine/serine transporter TdcC, found in Edwardsiella piscicida.